The sequence spans 323 residues: CD-NTase-associated protein 12 (323 aa).

The TIR domain maps to 4 to 120; it reads RIFIGSSSEQ…LDGITVAKFT (117 aa). Glu-84 is an active-site residue. The segment at 154–323 is STING domain; it reads STALAIGYYN…YVNVLTNVKL (170 aa). 3',3'-c-di-GMP contacts are provided by Ser-164, Phe-165, Arg-234, Pro-237, Asp-259, Ser-262, and Thr-263.

This sequence in the C-terminal section; belongs to the bacterial STING family. As to quaternary structure, forms homodimers which subsequently form filaments. In vitro in the presence of c-di-GMP forms filaments up to 300 nm in length with an ordered array of parallel-stacked subunits, where the TIR domains form one face of the filament and the STING domains form the other face. Antiparallel double-filament structures are also seen. 3'3'-cGAMP weakly induces filament formation, while 2'3'-cGAMP does not.

The catalysed reaction is NAD(+) + H2O = ADP-D-ribose + nicotinamide + H(+). With respect to regulation, NAD(+) hydrolase activity is strongly stimulated by c-di-GMP, weakly by 3'3'-cGAMP, very weakly by c-di-AMP and not at all by 2'3'-cGAMP. Self-association of TIR domains is required for NADase activity. Functionally, effector protein of a CBASS antiviral system with NAD(+) hydrolase activity. CBASS (cyclic oligonucleotide-based antiphage signaling system) provides immunity against bacteriophage. The CD-NTase protein synthesizes cyclic nucleotides in response to infection; these serve as specific second messenger signals. The signals activate a diverse range of effectors, leading to bacterial cell death and thus abortive phage infection. A type I-D(GG) CBASS system. In terms of biological role, upon activation by 3'3'-c-di-GMP forms filaments which hydrolyze NAD(+); filament formation is required for enzyme activation. Induction in an E.coli strain that synthesizes c-di-GMP leads to significant growth inhibition. Binds c-di-GMP and 3'3'-cGAMP (3'3'-cyclic GMP-AMP), but not c-di-AMP, 2'3'-cGAMP or cUMP-AMP. In Sphingobacterium faecium (strain DSM 11690 / JCM 21820 / NBRC 15299 / NCIMB 13408 / KS 0470), this protein is CD-NTase-associated protein 12.